Here is a 349-residue protein sequence, read N- to C-terminus: DNA polymerase IV (349 aa).

In terms of domain architecture, UmuC spans 3 to 187 (VLFVDFDYFF…LDISKVPGVG (185 aa)). The Mg(2+) site is built by Asp7 and Asp105. Residue Glu106 is part of the active site.

This sequence belongs to the DNA polymerase type-Y family. In terms of assembly, monomer. It depends on Mg(2+) as a cofactor.

The protein localises to the cytoplasm. The catalysed reaction is DNA(n) + a 2'-deoxyribonucleoside 5'-triphosphate = DNA(n+1) + diphosphate. In terms of biological role, poorly processive, error-prone DNA polymerase involved in untargeted mutagenesis. Copies undamaged DNA at stalled replication forks, which arise in vivo from mismatched or misaligned primer ends. These misaligned primers can be extended by PolIV. Exhibits no 3'-5' exonuclease (proofreading) activity. May be involved in translesional synthesis. This is DNA polymerase IV from Metallosphaera sedula (strain ATCC 51363 / DSM 5348 / JCM 9185 / NBRC 15509 / TH2).